Here is a 219-residue protein sequence, read N- to C-terminus: Mitochondrial fission factor homolog A (219 aa).

Over 1–199 (MAEINRMQYE…ENKERVKHEM (199 aa)) the chain is Cytoplasmic. Residues 164–194 (DLALADAASLRRQIIKLNRRLLLLEEENKER) adopt a coiled-coil conformation. A helical; Anchor for type IV membrane protein transmembrane segment spans residues 200 to 217 (TMYSIIIIFGLLNSWLWL). Over 218–219 (RR) the chain is Extracellular.

This sequence belongs to the Tango11 family.

The protein localises to the mitochondrion outer membrane. Its subcellular location is the peroxisome. It localises to the cytoplasmic vesicle. It is found in the secretory vesicle. The protein resides in the synaptic vesicle. Functionally, plays a role in mitochondrial and peroxisomal fission. Promotes the recruitment and association of the fission mediator dynamin-related protein 1 (DNM1L) to the mitochondrial surface. The sequence is that of Mitochondrial fission factor homolog A (mff-a) from Xenopus laevis (African clawed frog).